Reading from the N-terminus, the 150-residue chain is Lymphocyte antigen 6 complex locus protein G5c (150 aa).

The first 41 residues, 1–41, serve as a signal peptide directing secretion; it reads MRFMAGPAGSQSLGPLCFHSSPQALYTVLLIVLVMMSLVFG. One can recognise a UPAR/Ly6 domain in the interval 60–150; sequence LRCYRCLLET…DPQNRGLYTP (91 aa). Disulfide bonds link C62-C89, C65-C74, C81-C107, and C134-C139. N-linked (GlcNAc...) asparagine glycosylation is present at N96.

As to quaternary structure, forms oligomers. In terms of processing, N-glycosylated. As to expression, detected in T-cell lines and fetal and adult lung.

Its subcellular location is the secreted. In terms of biological role, may have a role in hematopoietic cell differentiation. The chain is Lymphocyte antigen 6 complex locus protein G5c (LY6G5C) from Homo sapiens (Human).